We begin with the raw amino-acid sequence, 580 residues long: Proline--tRNA ligase (580 aa).

The protein belongs to the class-II aminoacyl-tRNA synthetase family. ProS type 1 subfamily. Homodimer.

The protein resides in the cytoplasm. The enzyme catalyses tRNA(Pro) + L-proline + ATP = L-prolyl-tRNA(Pro) + AMP + diphosphate. Catalyzes the attachment of proline to tRNA(Pro) in a two-step reaction: proline is first activated by ATP to form Pro-AMP and then transferred to the acceptor end of tRNA(Pro). As ProRS can inadvertently accommodate and process non-cognate amino acids such as alanine and cysteine, to avoid such errors it has two additional distinct editing activities against alanine. One activity is designated as 'pretransfer' editing and involves the tRNA(Pro)-independent hydrolysis of activated Ala-AMP. The other activity is designated 'posttransfer' editing and involves deacylation of mischarged Ala-tRNA(Pro). The misacylated Cys-tRNA(Pro) is not edited by ProRS. The protein is Proline--tRNA ligase of Albidiferax ferrireducens (strain ATCC BAA-621 / DSM 15236 / T118) (Rhodoferax ferrireducens).